We begin with the raw amino-acid sequence, 299 residues long: ATP synthase gamma chain (299 aa).

This sequence belongs to the ATPase gamma chain family. As to quaternary structure, F-type ATPases have 2 components, CF(1) - the catalytic core - and CF(0) - the membrane proton channel. CF(1) has five subunits: alpha(3), beta(3), gamma(1), delta(1), epsilon(1). CF(0) has three main subunits: a, b and c.

Its subcellular location is the cell membrane. Functionally, produces ATP from ADP in the presence of a proton gradient across the membrane. The gamma chain is believed to be important in regulating ATPase activity and the flow of protons through the CF(0) complex. This chain is ATP synthase gamma chain, found in Clavibacter sepedonicus (Clavibacter michiganensis subsp. sepedonicus).